Here is a 1816-residue protein sequence, read N- to C-terminus: uncharacterized protein (1816 aa).

2 disordered regions span residues 338–357 (DSSS…NNNN) and 562–605 (ELEK…IKPK). Over residues 339-357 (SSSSSSNNNNNNNNNNNNN) the composition is skewed to low complexity. Residues 562-577 (ELEKERIKKEKEDSKK) show a composition bias toward basic and acidic residues. Residues 581–603 (KQSSSSSSSSTTTTSTTTSSTIK) are compositionally biased toward low complexity. The region spanning 826 to 999 (LDIVDKRESA…FLKKIDPNRK (174 aa)) is the Helicase ATP-binding domain. Residue 839 to 846 (ASTSSGKT) participates in ATP binding. The DEAH box signature appears at 949–952 (DEVH). The Helicase C-terminal domain occupies 1198–1379 (QLDLVIERFQ…SVVSPSLCLS (182 aa)). The tract at residues 1388–1487 (TNGSANKSNE…TTTKTPTTTS (100 aa)) is disordered. Over residues 1395-1427 (SNEENKVQVKENEKEREKEKEKEKEKEKEKETI) the composition is skewed to basic and acidic residues. Residues 1445–1454 (NWDDDEEETA) are compositionally biased toward acidic residues. The span at 1456–1487 (STKTTPATTPTTTTTENTPATTTTTKTPTTTS) shows a compositional bias: low complexity.

The protein belongs to the helicase family. SKI2 subfamily.

The protein localises to the nucleus. This is an uncharacterized protein from Dictyostelium discoideum (Social amoeba).